Reading from the N-terminus, the 757-residue chain is RNA-directed RNA polymerase catalytic subunit (757 aa).

Residues 50–82 are disordered; the sequence is SEKGKWTTNTETGAPQLNPIDGPLPEDNEPSGY. A compositionally biased stretch (polar residues) spans 55–64; it reads WTTNTETGAP. 2 short sequence motifs (nuclear localization signal) span residues 187 to 195 and 203 to 216; these read RKRRVRDNM and RTIG…NKRI. A promoter-binding site region spans residues 249–256; it reads RGFVYFVE. The 198-residue stretch at 286 to 483 folds into the RdRp catalytic domain; it reads VRKMMTNSQD…GINMSKKKSY (198 aa).

Belongs to the influenza viruses polymerase PB1 family. Influenza RNA polymerase is composed of three subunits: PB1, PB2 and PA. Interacts (via N-terminus) with PA (via C-terminus). Interacts (via C-terminus) with PB2 (via N-terminus); this interaction is essential for transcription initiation. Post-translationally, phosphorylated by host PRKCA.

It is found in the host nucleus. It localises to the host cytoplasm. The catalysed reaction is RNA(n) + a ribonucleoside 5'-triphosphate = RNA(n+1) + diphosphate. Functionally, RNA-dependent RNA polymerase which is responsible for replication and transcription of virus RNA segments. The transcription of viral mRNAs occurs by a unique mechanism called cap-snatching. 5' methylated caps of cellular mRNAs are cleaved after 10-13 nucleotides by PA. In turn, these short capped RNAs are used as primers by PB1 for transcription of viral mRNAs. During virus replication, PB1 initiates RNA synthesis and copy vRNA into complementary RNA (cRNA) which in turn serves as a template for the production of more vRNAs. The sequence is that of RNA-directed RNA polymerase catalytic subunit from Influenza A virus (strain A/Leningrad/134/17/1957 H2N2).